We begin with the raw amino-acid sequence, 63 residues long: DNA gyrase inhibitor YacG (63 aa).

The Zn(2+) site is built by Cys-9, Cys-12, Cys-28, and Cys-32.

Belongs to the DNA gyrase inhibitor YacG family. In terms of assembly, interacts with GyrB. It depends on Zn(2+) as a cofactor.

Functionally, inhibits all the catalytic activities of DNA gyrase by preventing its interaction with DNA. Acts by binding directly to the C-terminal domain of GyrB, which probably disrupts DNA binding by the gyrase. This chain is DNA gyrase inhibitor YacG, found in Salmonella choleraesuis (strain SC-B67).